Here is a 354-residue protein sequence, read N- to C-terminus: UDP-3-O-acylglucosamine N-acyltransferase (354 aa).

Histidine 258 (proton acceptor) is an active-site residue.

The protein belongs to the transferase hexapeptide repeat family. LpxD subfamily. As to quaternary structure, homotrimer.

The enzyme catalyses a UDP-3-O-[(3R)-3-hydroxyacyl]-alpha-D-glucosamine + a (3R)-hydroxyacyl-[ACP] = a UDP-2-N,3-O-bis[(3R)-3-hydroxyacyl]-alpha-D-glucosamine + holo-[ACP] + H(+). It participates in bacterial outer membrane biogenesis; LPS lipid A biosynthesis. Its function is as follows. Catalyzes the N-acylation of UDP-3-O-acylglucosamine using 3-hydroxyacyl-ACP as the acyl donor. Is involved in the biosynthesis of lipid A, a phosphorylated glycolipid that anchors the lipopolysaccharide to the outer membrane of the cell. The protein is UDP-3-O-acylglucosamine N-acyltransferase of Rhizobium meliloti (strain 1021) (Ensifer meliloti).